The chain runs to 349 residues: tRNA pseudouridine synthase D (349 aa).

Phenylalanine 27 lines the substrate pocket. Aspartate 80 serves as the catalytic Nucleophile. Asparagine 129 is a substrate binding site. A TRUD domain is found at 155-303; sequence GVPNYFGAQR…VEAARRAMLL (149 aa). Substrate is bound at residue phenylalanine 329.

The protein belongs to the pseudouridine synthase TruD family.

It carries out the reaction uridine(13) in tRNA = pseudouridine(13) in tRNA. In terms of biological role, responsible for synthesis of pseudouridine from uracil-13 in transfer RNAs. This Escherichia coli O9:H4 (strain HS) protein is tRNA pseudouridine synthase D.